Consider the following 374-residue polypeptide: Peptide chain release factor 2 (374 aa).

At Gln-248 the chain carries N5-methylglutamine.

This sequence belongs to the prokaryotic/mitochondrial release factor family. Post-translationally, methylated by PrmC. Methylation increases the termination efficiency of RF2.

The protein localises to the cytoplasm. Peptide chain release factor 2 directs the termination of translation in response to the peptide chain termination codons UGA and UAA. The polypeptide is Peptide chain release factor 2 (Thermomicrobium roseum (strain ATCC 27502 / DSM 5159 / P-2)).